The primary structure comprises 213 residues: Glycerol-3-phosphate acyltransferase (213 aa).

5 helical membrane passes run 3 to 23 (ILLAALVAYLIGSVSFAVVVS), 51 to 71 (KAAILTLVGDAFKGWIAVWLA), 78 to 98 (DVAVAWVAIAVFLGHLYPVFF), 115 to 135 (AVHPVLGLATALTWLIVAFFF), and 140 to 160 (LAALVAAVFAPVFDVFLFGTP).

It belongs to the PlsY family. Probably interacts with PlsX.

The protein resides in the cell inner membrane. The catalysed reaction is an acyl phosphate + sn-glycerol 3-phosphate = a 1-acyl-sn-glycero-3-phosphate + phosphate. It functions in the pathway lipid metabolism; phospholipid metabolism. Functionally, catalyzes the transfer of an acyl group from acyl-phosphate (acyl-PO(4)) to glycerol-3-phosphate (G3P) to form lysophosphatidic acid (LPA). This enzyme utilizes acyl-phosphate as fatty acyl donor, but not acyl-CoA or acyl-ACP. The sequence is that of Glycerol-3-phosphate acyltransferase from Burkholderia cenocepacia (strain ATCC BAA-245 / DSM 16553 / LMG 16656 / NCTC 13227 / J2315 / CF5610) (Burkholderia cepacia (strain J2315)).